Reading from the N-terminus, the 79-residue chain is uncharacterized protein (79 aa).

Residues 4 to 43 (QENEDLRKQLVEASELLKSQAKELKDAHQQQKLALQDFLE) adopt a coiled-coil conformation.

This is an uncharacterized protein from Homo sapiens (Human).